The following is a 362-amino-acid chain: Putative RING-H2 finger protein ATL21B (362 aa).

Residues 1–23 form the signal peptide; it reads MIISKQLFLLFFLLFFIFPLRHA. Residues 234-254 traverse the membrane as a helical segment; the sequence is VVAVLICLSIIGAVILFVTCI. Residues 316–358 form an RING-type; atypical zinc finger; sequence CPICLSEYVSKETVRFIPECDHCFHAKCIDVWLKIHGSCPLCR.

It belongs to the RING-type zinc finger family. ATL subfamily.

The protein resides in the membrane. It catalyses the reaction S-ubiquitinyl-[E2 ubiquitin-conjugating enzyme]-L-cysteine + [acceptor protein]-L-lysine = [E2 ubiquitin-conjugating enzyme]-L-cysteine + N(6)-ubiquitinyl-[acceptor protein]-L-lysine.. Its pathway is protein modification; protein ubiquitination. This is Putative RING-H2 finger protein ATL21B (ATL21B) from Arabidopsis thaliana (Mouse-ear cress).